Here is a 124-residue protein sequence, read N- to C-terminus: Ribonuclease pancreatic (124 aa).

The tract at residues 1–24 (KETAAAKFQRQHMDSSTSSASSSN) is disordered. Lys-7 and Arg-10 together coordinate substrate. His-12 (proton acceptor) is an active-site residue. 4 disulfide bridges follow: Cys-26–Cys-84, Cys-40–Cys-95, Cys-58–Cys-110, and Cys-65–Cys-72. Residue Asn-34 is glycosylated (N-linked (GlcNAc...) asparagine; in river-breed only). Substrate-binding positions include 41–45 (KPVNT), Lys-66, and Arg-85. His-119 (proton donor) is an active-site residue.

It belongs to the pancreatic ribonuclease family. In terms of assembly, monomer. Interacts with and forms tight 1:1 complexes with RNH1. Dimerization of two such complexes may occur. Interaction with RNH1 inhibits this protein. In terms of processing, swamp breed ribonuclease do not bind carbohydrate, but there is evidence of a polymorphic form that does. Pancreas.

The protein localises to the secreted. It catalyses the reaction an [RNA] containing cytidine + H2O = an [RNA]-3'-cytidine-3'-phosphate + a 5'-hydroxy-ribonucleotide-3'-[RNA].. It carries out the reaction an [RNA] containing uridine + H2O = an [RNA]-3'-uridine-3'-phosphate + a 5'-hydroxy-ribonucleotide-3'-[RNA].. In terms of biological role, endonuclease that catalyzes the cleavage of RNA on the 3' side of pyrimidine nucleotides. Acts on single-stranded and double-stranded RNA. The sequence is that of Ribonuclease pancreatic (RNASE1) from Bubalus bubalis (Domestic water buffalo).